We begin with the raw amino-acid sequence, 172 residues long: Nucleoside-triphosphatase THEP1 (172 aa).

ATP-binding positions include 11–18 (GKPGIGKT) and 101–108 (IILIDEIG).

This sequence belongs to the THEP1 NTPase family.

The catalysed reaction is a ribonucleoside 5'-triphosphate + H2O = a ribonucleoside 5'-diphosphate + phosphate + H(+). Functionally, has nucleotide phosphatase activity towards ATP, GTP, CTP, TTP and UTP. May hydrolyze nucleoside diphosphates with lower efficiency. The sequence is that of Nucleoside-triphosphatase THEP1 from Sulfolobus acidocaldarius (strain ATCC 33909 / DSM 639 / JCM 8929 / NBRC 15157 / NCIMB 11770).